Consider the following 340-residue polypeptide: Extracellular matrix protein-binding protein emp (340 aa).

Residues 1–26 (MKKKLLVLTMSTLFATQLINSNHAKA) form the signal peptide.

Its subcellular location is the cell surface. Functionally, adhesin that binds to the host cell extracellular matrix proteins fibronectin, fibrinogen, collagen, and vitronectin. The sequence is that of Extracellular matrix protein-binding protein emp (emp) from Staphylococcus aureus (strain Mu50 / ATCC 700699).